The chain runs to 239 residues: MSESKKPLNHLAIIMDGNGRWAKKRHLPRFVGHRHGMDNIRNIALAANKLGIKVLTLYAFSTENWARPTDEVNYLMRLPIDFFDKFMPELMENNVRVNIMGFVDELPEKTYLVTQKAMAETANNTGMVLNFAFNYGSRREITAGVQEIARKVKVGEIDIDDISEKMVSDHLLTHSLAPYEDPDLLIRTSGEERLSNFLLWQMAYTEFSFSDKLWPDFDKTDLEELVKDYQGRNRRFGKV.

Residue D16 is part of the active site. Position 16 (D16) interacts with Mg(2+). Residues 17-20, W21, R29, H33, and 61-63 contribute to the substrate site; these read GNGR and STE. N64 acts as the Proton acceptor in catalysis. Substrate is bound by residues W65, R67, R187, and 193–195; that span reads RLS. E206 contributes to the Mg(2+) binding site.

Belongs to the UPP synthase family. Homodimer. Requires Mg(2+) as cofactor.

In terms of biological role, catalyzes the condensation of isopentenyl diphosphate (IPP) with allylic pyrophosphates generating different type of terpenoids. This Lactobacillus johnsonii (strain CNCM I-12250 / La1 / NCC 533) protein is Isoprenyl transferase.